We begin with the raw amino-acid sequence, 220 residues long: Thiopurine S-methyltransferase (220 aa).

The S-adenosyl-L-methionine site is built by tryptophan 10, leucine 45, glutamate 66, and arginine 123.

The protein belongs to the class I-like SAM-binding methyltransferase superfamily. TPMT family.

The protein resides in the cytoplasm. The catalysed reaction is S-adenosyl-L-methionine + a thiopurine = S-adenosyl-L-homocysteine + a thiopurine S-methylether.. This Nitrosomonas eutropha (strain DSM 101675 / C91 / Nm57) protein is Thiopurine S-methyltransferase.